Reading from the N-terminus, the 129-residue chain is Small ribosomal subunit protein uS11 (129 aa).

The protein belongs to the universal ribosomal protein uS11 family. As to quaternary structure, part of the 30S ribosomal subunit. Interacts with proteins S7 and S18. Binds to IF-3.

Located on the platform of the 30S subunit, it bridges several disparate RNA helices of the 16S rRNA. Forms part of the Shine-Dalgarno cleft in the 70S ribosome. This chain is Small ribosomal subunit protein uS11, found in Sphingopyxis alaskensis (strain DSM 13593 / LMG 18877 / RB2256) (Sphingomonas alaskensis).